Here is a 91-residue protein sequence, read N- to C-terminus: UPF0358 protein SSP1677 (91 aa).

This sequence belongs to the UPF0358 family.

In Staphylococcus saprophyticus subsp. saprophyticus (strain ATCC 15305 / DSM 20229 / NCIMB 8711 / NCTC 7292 / S-41), this protein is UPF0358 protein SSP1677.